Here is a 388-residue protein sequence, read N- to C-terminus: Succinyl-diaminopimelate desuccinylase (388 aa).

Position 74 (His-74) interacts with Zn(2+). Residue Asp-76 is part of the active site. A Zn(2+)-binding site is contributed by Asp-107. Glu-142 acts as the Proton acceptor in catalysis. The Zn(2+) site is built by Glu-143, Glu-171, and His-360.

The protein belongs to the peptidase M20A family. DapE subfamily. In terms of assembly, homodimer. Requires Zn(2+) as cofactor. The cofactor is Co(2+).

The catalysed reaction is N-succinyl-(2S,6S)-2,6-diaminopimelate + H2O = (2S,6S)-2,6-diaminopimelate + succinate. It participates in amino-acid biosynthesis; L-lysine biosynthesis via DAP pathway; LL-2,6-diaminopimelate from (S)-tetrahydrodipicolinate (succinylase route): step 3/3. Functionally, catalyzes the hydrolysis of N-succinyl-L,L-diaminopimelic acid (SDAP), forming succinate and LL-2,6-diaminopimelate (DAP), an intermediate involved in the bacterial biosynthesis of lysine and meso-diaminopimelic acid, an essential component of bacterial cell walls. The sequence is that of Succinyl-diaminopimelate desuccinylase from Rhodopseudomonas palustris (strain BisB5).